A 456-amino-acid chain; its full sequence is Equilibrative nucleoside transporter 2 (456 aa).

The helical transmembrane segment at 13–33 (LVGISFFILGLGTLLPWNFFI) threads the bilayer. Asn-48 and Asn-57 each carry an N-linked (GlcNAc...) asparagine glycan. A run of 5 helical transmembrane segments spans residues 70–90 (WVTL…SFLY), 99–119 (ILGS…LVKV), 124–144 (GPFF…SAVL), 162–182 (LFLS…LLSM), and 193–213 (LGYF…YLSL). Asn-225 carries N-linked (GlcNAc...) asparagine glycosylation. A Phosphoserine modification is found at Ser-252. 5 consecutive transmembrane segments (helical) span residues 291–311 (WLTA…FPAI), 324–344 (WSQF…DWLG), 360–380 (LLPL…LCHV), 386–406 (LPIL…FAVS), and 432–452 (ALMT…SFLF).

The protein belongs to the SLC29A/ENT transporter (TC 2.A.57) family. Glycosylated. In terms of tissue distribution, highly expressed in skeletal muscle. Expressed in liver, lung, placenta, brain, heart, kidney and ovarian tissues. Expressed in testis at the blood-brain-barrier.

Its subcellular location is the apical cell membrane. It localises to the basolateral cell membrane. It catalyses the reaction inosine(in) = inosine(out). The enzyme catalyses adenosine(in) = adenosine(out). It carries out the reaction uridine(out) = uridine(in). The catalysed reaction is thymidine(in) = thymidine(out). It catalyses the reaction hypoxanthine(out) = hypoxanthine(in). The enzyme catalyses adenine(out) = adenine(in). It carries out the reaction cytidine(in) = cytidine(out). The catalysed reaction is thymine(out) = thymine(in). It catalyses the reaction uracil(in) = uracil(out). The enzyme catalyses guanine(out) = guanine(in). It carries out the reaction guanosine(in) = guanosine(out). Functionally, bidirectional uniporter involved in the facilitative transport of nucleosides and nucleobases, and contributes to maintaining their cellular homeostasis. Functions as a Na(+)-independent, passive transporter. Involved in the transport of nucleosides such as inosine, adenosine, uridine, thymidine, cytidine and guanosine. Also able to transport purine nucleobases (hypoxanthine, adenine, guanine) and pyrimidine nucleobases (thymine, uracil). Involved in nucleoside transport at basolateral membrane of kidney cells, allowing liver absorption of nucleoside metabolites. Mediates apical nucleoside uptake into Sertoli cells, thereby regulating the transport of nucleosides in testis across the blood-testis-barrier. Mediates both the influx and efflux of hypoxanthine in skeletal muscle microvascular endothelial cells to control the amount of intracellular hypoxanthine available for xanthine oxidase-mediated ROS production. Its function is as follows. Non functional nucleoside transporter protein for adenosine or thymidine transport. Does not express on cell membrane. This chain is Equilibrative nucleoside transporter 2, found in Homo sapiens (Human).